A 533-amino-acid polypeptide reads, in one-letter code: Probable polyamine oxidase 5 (533 aa).

FAD-binding residues include Glu37, Arg45, Val262, and Glu501.

Belongs to the flavin monoamine oxidase family. It depends on FAD as a cofactor. Expressed in root vasculature, leaves and stems.

The protein localises to the cytoplasm. It carries out the reaction spermine + O2 + H2O = 3-aminopropanal + spermidine + H2O2. The catalysed reaction is N(1)-acetylspermine + O2 + H2O = 3-acetamidopropanal + spermidine + H2O2. The enzyme catalyses norspermine + O2 + H2O = norspermidine + 3-aminopropanal + H2O2. It catalyses the reaction thermospermine + O2 + H2O = 3-aminopropanal + spermidine + H2O2. Its pathway is amine and polyamine degradation; spermine degradation. Flavoenzyme involved in polyamine back-conversion. Catalyzes the oxidation of the secondary amino group of polyamines, such as spermine and its acetyl derivatives. Substrate preference is spermine &gt; N(1)-acetylspermine &gt; thermospermine &gt; norspermine. Plays an important role in the regulation of polyamine intracellular concentration. Involved in xylem differentiation by controlling thermospermine homeostasis, and participating in the tightly controlled interplay between auxin and cytokinin that is necessary for proper xylem differentiation. Involved in the production of hydrogen peroxide in response to salt and cold stresses. The protein is Probable polyamine oxidase 5 of Arabidopsis thaliana (Mouse-ear cress).